We begin with the raw amino-acid sequence, 388 residues long: Glutamate 5-kinase (388 aa).

Position 21 (lysine 21) interacts with ATP. Serine 61, aspartate 148, and asparagine 160 together coordinate substrate. Residues 180–181 and 222–228 contribute to the ATP site; these read TD and TGGMITK. The region spanning 285–363 is the PUA domain; the sequence is RGSVFLDPGA…RWLARELGAE (79 aa).

This sequence belongs to the glutamate 5-kinase family.

The protein resides in the cytoplasm. The catalysed reaction is L-glutamate + ATP = L-glutamyl 5-phosphate + ADP. The protein operates within amino-acid biosynthesis; L-proline biosynthesis; L-glutamate 5-semialdehyde from L-glutamate: step 1/2. Its function is as follows. Catalyzes the transfer of a phosphate group to glutamate to form L-glutamate 5-phosphate. The sequence is that of Glutamate 5-kinase from Thermobifida fusca (strain YX).